The chain runs to 106 residues: MSTEKVAFRMFLIPGCAAEYQRRHAAIWPELSALLRAAGVSDYSIYLDQEHHVLFATLRRSRAHGMDALPAHPVMRRWWAHMADIMRYGTDGTPIVEPLPCMFHMD.

A substrate-binding site is contributed by Y20. Catalysis depends on H24, which acts as the Proton donor. Residues Y43 and 78–79 each bind substrate; that span reads WW.

It belongs to the rhamnose mutarotase family. Homodimer.

It localises to the cytoplasm. It catalyses the reaction alpha-L-rhamnose = beta-L-rhamnose. The protein operates within carbohydrate metabolism; L-rhamnose metabolism. In terms of biological role, involved in the anomeric conversion of L-rhamnose. The polypeptide is L-rhamnose mutarotase (Verminephrobacter eiseniae (strain EF01-2)).